Consider the following 652-residue polypeptide: MSQIHKHPIPAAIAERCLITPEQYDAKYQQSVHDPDAFWGEQGKILDWITPYQTVKNTSFAPGNVSIKWYEDGTLNLAANCLDRHLSERGDQTAIIWEGDDATQSKHISYRELHRDVCRFANTLTSLGIKKGDVVAIYMPMVPEAAVAMLACARIGAVHSVIFGGFSPEAVAGRIIDSSARLVITADEGVRAGRAIPLKKNVDDALKNPGVTSVEHVVVFKRTGGNIEWHEGRDLWWSELVKKASAHHQPVEMNAEDPLFILYTSGSTGKPKGVLHTTGGYLVYAATTFLYAFDYHPGDIYWCTADVGWVTGHSYLLYGPLACGATTLMFEGVPNWPSANRMAQVVDKHKVNILYTAPTAIRALMAEGDKAIDGTDRSSLRILGSVGEPINPEAWEWYWKKIGNEKCPVIDTWWQTETGGFMITPLPGATELKAGSATRPFFGVQPALVDNEGNPQQGATEGNLVITDSWPGQARTLFGDHERFEQTYFSTFKNMYFSGDGARRDEDGYYWITGRVDDVLNVSGHRLGTAEIESALVSHPKIAEAAVVGIPHSIKGQAIYAYVTLNHGEEPSAELYSEVRNWVRKEIGPLATPDVLHWTDSLPKTRSGKIMRRILRKIAAGDTSNLGDTSTLADPGVVEKLLEEKQSIAMPS.

Residues 191-194, Thr-311, and Asn-335 each bind CoA; that span reads RAGR. Residues 387–389, 411–416, Asp-500, and Arg-515 contribute to the ATP site; these read GEP and DTWWQT. Ser-523 serves as a coordination point for CoA. Arg-526 is a binding site for ATP. The Mg(2+) site is built by Val-537, His-539, and Ile-542. Arg-584 contributes to the CoA binding site. Lys-609 bears the N6-acetyllysine mark.

The protein belongs to the ATP-dependent AMP-binding enzyme family. The cofactor is Mg(2+). In terms of processing, acetylated. Deacetylation by the SIR2-homolog deacetylase activates the enzyme.

The enzyme catalyses acetate + ATP + CoA = acetyl-CoA + AMP + diphosphate. Functionally, catalyzes the conversion of acetate into acetyl-CoA (AcCoA), an essential intermediate at the junction of anabolic and catabolic pathways. Acs undergoes a two-step reaction. In the first half reaction, Acs combines acetate with ATP to form acetyl-adenylate (AcAMP) intermediate. In the second half reaction, it can then transfer the acetyl group from AcAMP to the sulfhydryl group of CoA, forming the product AcCoA. Its function is as follows. Enables the cell to use acetate during aerobic growth to generate energy via the TCA cycle, and biosynthetic compounds via the glyoxylate shunt. Acetylates CheY, the response regulator involved in flagellar movement and chemotaxis. The protein is Acetyl-coenzyme A synthetase of Cronobacter sakazakii (strain ATCC BAA-894) (Enterobacter sakazakii).